Consider the following 345-residue polypeptide: Glycerol-3-phosphate dehydrogenase [NAD(P)+] (345 aa).

NADPH-binding residues include Ser23, Tyr24, His44, and Lys118. The sn-glycerol 3-phosphate site is built by Lys118, Gly147, and Thr149. Residue Ala151 participates in NADPH binding. Residues Lys203, Asp256, Ser266, Arg267, and Asn268 each contribute to the sn-glycerol 3-phosphate site. Lys203 functions as the Proton acceptor in the catalytic mechanism. Arg267 contributes to the NADPH binding site. Positions 291 and 293 each coordinate NADPH.

It belongs to the NAD-dependent glycerol-3-phosphate dehydrogenase family.

It localises to the cytoplasm. It carries out the reaction sn-glycerol 3-phosphate + NAD(+) = dihydroxyacetone phosphate + NADH + H(+). It catalyses the reaction sn-glycerol 3-phosphate + NADP(+) = dihydroxyacetone phosphate + NADPH + H(+). Its pathway is membrane lipid metabolism; glycerophospholipid metabolism. Functionally, catalyzes the reduction of the glycolytic intermediate dihydroxyacetone phosphate (DHAP) to sn-glycerol 3-phosphate (G3P), the key precursor for phospholipid synthesis. In Vibrio vulnificus (strain CMCP6), this protein is Glycerol-3-phosphate dehydrogenase [NAD(P)+].